The primary structure comprises 65 residues: Large ribosomal subunit protein uL29 (65 aa).

Belongs to the universal ribosomal protein uL29 family.

In Brevibacillus brevis (strain 47 / JCM 6285 / NBRC 100599), this protein is Large ribosomal subunit protein uL29.